Consider the following 267-residue polypeptide: Pre-protein VI (267 aa).

Residues 1–33 constitute a propeptide that is removed on maturation; that stretch reads MEDINFASLAPRHGSRPFMGTWNEIGTSQLNGG. The segment at 34–54 is amphipathic alpha-helix essential for membrane lytic activity; the sequence is AFSWSSLWSGIKNFGSSIKSF. The involved in endosomal membrane lysis stretch occupies residues 36–53; sequence SWSSLWSGIKNFGSSIKS. The tract at residues 48–74 is interaction with hexon protein; the sequence is GSSIKSFGNKAWNSNTGQMLRDKLKDQ. The Nuclear export signal motif lies at 67–76; the sequence is LRDKLKDQNF. 2 disordered regions span residues 107 to 184 and 199 to 230; these read LENS…PMTK and KPVT…PTAP. 2 stretches are compositionally biased toward basic and acidic residues: residues 123–135 and 146–155; these read PKVE…EKLP and KGEKRPRPDL. The Nuclear localization signal motif lies at 149-153; that stretch reads KRPRP. Positions 166 to 169 match the PPXY motif motif; sequence PPSY. Over residues 205-217 the composition is skewed to pro residues; it reads LPPPVPTVPPMPA. The span at 218-230 shows a compositional bias: low complexity; the sequence is PTLGTAVSRPTAP. The short motif at 248–259 is the Nuclear export signal element; sequence STLNSIVGLGVK. An interaction with hexon protein region spans residues 250–256; the sequence is LNSIVGL. The segment at 257 to 267 is binds to importin alpha/beta, involved in hexon nuclear import; that stretch reads GVKSLKRRRCY. A Nuclear localization signal motif is present at residues 262–265; that stretch reads KRRR.

This sequence belongs to the adenoviridae protein VI family. In terms of assembly, interacts with hexon protein; this interaction allows nuclear import of hexon trimers and possibly pre-capsid assembly. Interacts (via C-terminal NLS) with importin alpha/beta. Interacts (via PPxY motif) with host NEDD4 ubiquitine ligase; this interaction might play a role in virus intracellular transport during entry. Part of a complex composed of the core-capsid bridging protein, the endosome lysis protein VI and the hexon-linking protein VIII; these interactions bridge the virus core to the capsid. Interacts with peripentonal hexons; this interaction stabilizes the capsid by gluing two peripentonal hexons together and joining them with an adjacent group-of-nine hexon. As to quaternary structure, heterodimer with the viral protease; disulfide-linked. Interacts with the viral protease. Ubiquitinated by Nedd4 following partial capsid disassembly; which might play a role in intracellular virus movement during entry. Post-translationally, contains the major nuclear import and export signals. Proteolytically removed during virion maturation. The processing of the C-terminus turns the precursor into a mature viral structural protein and abrogates its ability to promote hexon import and act as a potential chaperone protein.

It is found in the host nucleus. It localises to the host cytoplasm. Its subcellular location is the virion. Its function is as follows. During virus assembly, promotes hexon trimers nuclear import through nuclear pore complexes via an importin alpha/beta-dependent mechanism. By analogy to herpesviruses capsid assembly, might act as a chaperone to promote the formation of the icosahedral capsid. Functionally, structural component of the virion that provides increased stability to the particle shell through its interaction with the core-capsid bridging protein and the hexon-linking protein VIII. Fibers shedding during virus entry into host cell allows the endosome lysis protein to be exposed as a membrane-lytic peptide. Exhibits pH-independent membrane fragmentation activity and probably mediates viral rapid escape from host endosome via organellar membrane lysis. It is not clear if it then remains partially associated with the capsid and involved in the intracellular microtubule-dependent transport of capsid to the nucleus, or if it is lost during endosomal penetration. Cofactor that activates the viral protease. Binds to viral protease in a 1:1 ratio. In Homo sapiens (Human), this protein is Pre-protein VI.